Reading from the N-terminus, the 595-residue chain is Outer dynein arm-docking complex subunit 3 (595 aa).

Residues 1-69 (MTSPLCRAAS…RGAGKPSVHS (69 aa)) form a disordered region. 2 coiled-coil regions span residues 94–327 (WNIK…REHL) and 385–473 (FAQL…ASKL).

As to quaternary structure, component of the outer dynein arm-docking complex along with ODAD1, ODAD2, ODAD4 and CLXN. Interacts with ODAD1. Interacts with PIERCE1 and PIERCE2; the interactions link the outer dynein arms docking complex (ODA-DC) to the internal microtubule inner proteins (MIP) in cilium axoneme.

It localises to the cytoplasm. The protein resides in the cytoskeleton. Its subcellular location is the cilium basal body. It is found in the microtubule organizing center. The protein localises to the centrosome. It localises to the centriole. The protein resides in the cilium axoneme. In terms of biological role, component of the outer dynein arm-docking complex (ODA-DC) that mediates outer dynein arms (ODA) binding onto the doublet microtubule. Involved in mediating assembly of both ODAs and their axonemal docking complex onto ciliary microtubules. The protein is Outer dynein arm-docking complex subunit 3 of Homo sapiens (Human).